Consider the following 216-residue polypeptide: MAGRGGAARPNGPAAGNKICQFKLVLLGESAVGKSSLVLRFVKGQFHEYQESTIGAAFLTQTVCLDDTTVKFEIWDTAGQERYHSLAPMYYRGAQAAIVVYDITNTDTFARAKNWVKELQRQASPNIVIALAGNKADLASKRAVEFQEAQAYADDNSLLFMETSAKTAMNVNEIFMAIAKKLPKNEPQNAAGAPSRNRGVDLQENSPASRSQCCSN.

The GTP site is built by Ser-30, Ala-31, Gly-33, Lys-34, Ser-35, Ser-36, His-47, Glu-48, Thr-53, and Gly-79. Ser-35 serves as a coordination point for Mg(2+). 2 consecutive short sequence motifs (switch) follow at residues 45-57 (QFHE…IGAA) and 78-94 (AGQE…YRGA). A Mg(2+)-binding site is contributed by Thr-53. Residue Ser-85 is modified to Phosphoserine. Asn-134, Lys-135, Asp-137, Ala-165, and Lys-166 together coordinate GTP. A disordered region spans residues 185–216 (NEPQNAAGAPSRNRGVDLQENSPASRSQCCSN). Residues 203–216 (QENSPASRSQCCSN) are compositionally biased toward polar residues. Residues Cys-213 and Cys-214 are each lipidated (S-geranylgeranyl cysteine).

It belongs to the small GTPase superfamily. Rab family. Interacts with EEA1 and INCA1. Interacts with GDI1, GDI2, CHML and CHM; phosphorylation at Ser-85 disrupts this interaction. Mg(2+) serves as cofactor. Post-translationally, phosphorylation of Ser-85 in the switch II region by LRRK2 prevents the association of RAB regulatory proteins, including CHM, CHML and RAB GDP dissociation inhibitors GDI1 and GDI2.

The protein localises to the cell membrane. It localises to the early endosome membrane. It is found in the melanosome. The catalysed reaction is GTP + H2O = GDP + phosphate + H(+). Regulated by guanine nucleotide exchange factors (GEFs) which promote the exchange of bound GDP for free GTP. Regulated by GTPase activating proteins (GAPs) which increase the GTP hydrolysis activity. Inhibited by GDP dissociation inhibitors (GDIs). In terms of biological role, the small GTPases Rab are key regulators of intracellular membrane trafficking, from the formation of transport vesicles to their fusion with membranes. Rabs cycle between an inactive GDP-bound form and an active GTP-bound form that is able to recruit to membranes different sets of downstream effectors directly responsible for vesicle formation, movement, tethering and fusion. This chain is Ras-related protein Rab-5C (RAB5C), found in Canis lupus familiaris (Dog).